Consider the following 395-residue polypeptide: MFPRVSTFLPLRPLSRHPLSSGSPETSAAAIMLLTVRHGTVRYRSSALLARTKNNIQRYFGTNSVICSKKDKQSVRTEETSKETSESQDSEKENTKKDLLGIIKGMKVELSTVNVRTTKPPKRRPLKSLEATLGRLRRATEYAPKKRIEPLSPELVAAASAVADSLPFDKQTTKSELLSQLQQHEEESRAQRDAKRPKISFSNIISDMKVARSATARVRSRPELRIQFDEGYDNYPGQEKTDDLKKRKNIFTGKRLNIFDMMAVTKEAPETDTSPSLWDVEFAKQLATVNEQPLQNGFEELIQWTKEGKLWEFPINNEAGFDDDGSEFHEHIFLEKHLESFPKQGPIRHFMELVTCGLSKNPYLSVKQKVEHIEWFRNYFNEKKDILKESNIQFN.

The transit peptide at 1-65 (MFPRVSTFLP…IQRYFGTNSV (65 aa)) directs the protein to the mitochondrion. 2 disordered regions span residues 70–97 (KDKQSVRTEETSKETSESQDSEKENTKK) and 175–196 (SELLSQLQQHEEESRAQRDAKR). Over residues 183 to 196 (QHEEESRAQRDAKR) the composition is skewed to basic and acidic residues.

It belongs to the mitochondrion-specific ribosomal protein mS31 family. Component of the mitochondrial small ribosomal subunit (mt-SSU). Mature mammalian 55S mitochondrial ribosomes consist of a small (28S) and a large (39S) subunit. The 28S small subunit contains a 12S ribosomal RNA (12S mt-rRNA) and 30 different proteins. The 39S large subunit contains a 16S rRNA (16S mt-rRNA), a copy of mitochondrial valine transfer RNA (mt-tRNA(Val)), which plays an integral structural role, and 52 different proteins.

The protein resides in the mitochondrion. The sequence is that of Small ribosomal subunit protein mS31 (MRPS31) from Homo sapiens (Human).